Here is a 57-residue protein sequence, read N- to C-terminus: DNA-directed RNA polymerase subunit Rpo6 (57 aa).

It belongs to the archaeal Rpo6/eukaryotic RPB6 RNA polymerase subunit family. As to quaternary structure, part of the RNA polymerase complex.

The protein localises to the cytoplasm. It carries out the reaction RNA(n) + a ribonucleoside 5'-triphosphate = RNA(n+1) + diphosphate. Functionally, DNA-dependent RNA polymerase (RNAP) catalyzes the transcription of DNA into RNA using the four ribonucleoside triphosphates as substrates. In Haloarcula marismortui (strain ATCC 43049 / DSM 3752 / JCM 8966 / VKM B-1809) (Halobacterium marismortui), this protein is DNA-directed RNA polymerase subunit Rpo6.